A 263-amino-acid chain; its full sequence is Tryptophan 2,3-dioxygenase (263 aa).

Substrate contacts are provided by residues 32–36, Y94, and R98; that span reads FIIVH. H221 contributes to the heme binding site. T235 is a substrate binding site.

It belongs to the tryptophan 2,3-dioxygenase family. As to quaternary structure, homotetramer. The cofactor is heme.

It catalyses the reaction L-tryptophan + O2 = N-formyl-L-kynurenine. It functions in the pathway amino-acid degradation; L-tryptophan degradation via kynurenine pathway; L-kynurenine from L-tryptophan: step 1/2. In terms of biological role, heme-dependent dioxygenase that catalyzes the oxidative cleavage of the L-tryptophan (L-Trp) pyrrole ring and converts L-tryptophan to N-formyl-L-kynurenine. Catalyzes the oxidative cleavage of the indole moiety. The protein is Tryptophan 2,3-dioxygenase of Erythrobacter litoralis (strain HTCC2594).